The following is a 337-amino-acid chain: Protein hairy (337 aa).

The interval 29-48 (KSDRRSNKPIMEKRRRARIN) is interaction with Topors. A bHLH domain is found at 31 to 88 (DRRSNKPIMEKRRRARINNCLNELKTLILDATKKDPARHSKLEKADILEKTVKHLQEL). Residues 107 to 136 (FKAGFADCVNEVSRFPGIEPAQRRRLLQHL) enclose the Orange domain. Disordered stretches follow at residues 146-178 (ELHQQQRQQQQQSIHAQMLPSPPSSPEQDSQQG) and 259-311 (MPQR…VIQR). A compositionally biased stretch (low complexity) spans 263 to 301 (TASTGSASSHSSAGYESAPGSSSSCSYAPPSPANSSYEP). Residues 334–337 (WRPW) carry the WRPW motif motif.

As to quaternary structure, transcription repression requires formation of a complex with a corepressor protein (Groucho). Interacts with gro (via WPRW motif) and Topors. Ubiquitinated by Topors.

It is found in the nucleus. In terms of biological role, pair-rule protein that regulates embryonic segmentation and adult bristle patterning. Transcriptional repressor of genes that require a bHLH protein for their transcription (e.g. ftz). The polypeptide is Protein hairy (Drosophila melanogaster (Fruit fly)).